Here is a 513-residue protein sequence, read N- to C-terminus: Glutamate--tRNA ligase 2 (513 aa).

The short motif at Pro11–Ser21 is the 'HIGH' region element. The short motif at Lys240–Arg244 is the 'KMSKS' region element. Lys243 provides a ligand contact to ATP.

It belongs to the class-I aminoacyl-tRNA synthetase family. Glutamate--tRNA ligase type 1 subfamily. Monomer.

The protein localises to the cytoplasm. It carries out the reaction tRNA(Glu) + L-glutamate + ATP = L-glutamyl-tRNA(Glu) + AMP + diphosphate. Functionally, catalyzes the attachment of glutamate to tRNA(Glu) in a two-step reaction: glutamate is first activated by ATP to form Glu-AMP and then transferred to the acceptor end of tRNA(Glu). This chain is Glutamate--tRNA ligase 2, found in Rickettsia rickettsii (strain Iowa).